A 364-amino-acid chain; its full sequence is UDP-N-acetylglucosamine--N-acetylmuramyl-(pentapeptide) pyrophosphoryl-undecaprenol N-acetylglucosamine transferase (364 aa).

Residues 13–15 (TGG), Asn-125, Arg-165, Ser-192, and Gln-293 contribute to the UDP-N-acetyl-alpha-D-glucosamine site.

It belongs to the glycosyltransferase 28 family. MurG subfamily.

It is found in the cell inner membrane. The catalysed reaction is di-trans,octa-cis-undecaprenyl diphospho-N-acetyl-alpha-D-muramoyl-L-alanyl-D-glutamyl-meso-2,6-diaminopimeloyl-D-alanyl-D-alanine + UDP-N-acetyl-alpha-D-glucosamine = di-trans,octa-cis-undecaprenyl diphospho-[N-acetyl-alpha-D-glucosaminyl-(1-&gt;4)]-N-acetyl-alpha-D-muramoyl-L-alanyl-D-glutamyl-meso-2,6-diaminopimeloyl-D-alanyl-D-alanine + UDP + H(+). Its pathway is cell wall biogenesis; peptidoglycan biosynthesis. Its function is as follows. Cell wall formation. Catalyzes the transfer of a GlcNAc subunit on undecaprenyl-pyrophosphoryl-MurNAc-pentapeptide (lipid intermediate I) to form undecaprenyl-pyrophosphoryl-MurNAc-(pentapeptide)GlcNAc (lipid intermediate II). The protein is UDP-N-acetylglucosamine--N-acetylmuramyl-(pentapeptide) pyrophosphoryl-undecaprenol N-acetylglucosamine transferase of Cereibacter sphaeroides (strain ATCC 17025 / ATH 2.4.3) (Rhodobacter sphaeroides).